The primary structure comprises 282 residues: Ribosome-inactivating protein bryodin II (282 aa).

Residues 1–21 (MRSIGFYSVLALYVGAHVTED) form the signal peptide. Asparagine 25 carries N-linked (GlcNAc...) asparagine glycosylation. Residue glutamate 183 is part of the active site.

Belongs to the ribosome-inactivating protein family. Type 1 RIP subfamily.

It catalyses the reaction Endohydrolysis of the N-glycosidic bond at one specific adenosine on the 28S rRNA.. In terms of biological role, ribosome-inactivating protein of type 1, inhibits protein synthesis in animal cells. The chain is Ribosome-inactivating protein bryodin II from Bryonia dioica (Red bryony).